Here is a 239-residue protein sequence, read N- to C-terminus: Ribosomal RNA small subunit methyltransferase G (239 aa).

S-adenosyl-L-methionine is bound by residues Gly78, Phe83, 129–130 (AE), and Arg148.

The protein belongs to the methyltransferase superfamily. RNA methyltransferase RsmG family.

It is found in the cytoplasm. Functionally, specifically methylates the N7 position of a guanine in 16S rRNA. In Clostridium botulinum (strain Loch Maree / Type A3), this protein is Ribosomal RNA small subunit methyltransferase G.